The following is a 77-amino-acid chain: Omega-conotoxin-like 6 (77 aa).

An N-terminal signal peptide occupies residues 1–22; that stretch reads MKLTCVVIIAVLLLTACQLITA. Residues 23–50 constitute a propeptide that is removed on maturation; that stretch reads DDSRGVQKHRSLRSTTKVSKSTSCMEAG. 3 disulfides stabilise this stretch: C46–C61, C53–C64, and C60–C71.

Belongs to the conotoxin O1 superfamily. In terms of tissue distribution, expressed by the venom duct.

It localises to the secreted. Functionally, omega-conotoxins act at presynaptic membranes, they bind and block voltage-gated calcium channels (Cav). The chain is Omega-conotoxin-like 6 from Conus striatus (Striated cone).